The following is a 379-amino-acid chain: Lipid-A-disaccharide synthase (379 aa).

This sequence belongs to the LpxB family.

It carries out the reaction a lipid X + a UDP-2-N,3-O-bis[(3R)-3-hydroxyacyl]-alpha-D-glucosamine = a lipid A disaccharide + UDP + H(+). Its pathway is bacterial outer membrane biogenesis; LPS lipid A biosynthesis. Condensation of UDP-2,3-diacylglucosamine and 2,3-diacylglucosamine-1-phosphate to form lipid A disaccharide, a precursor of lipid A, a phosphorylated glycolipid that anchors the lipopolysaccharide to the outer membrane of the cell. This is Lipid-A-disaccharide synthase from Vibrio parahaemolyticus serotype O3:K6 (strain RIMD 2210633).